The chain runs to 217 residues: Imidazole glycerol phosphate synthase subunit HisH (217 aa).

The Glutamine amidotransferase type-1 domain maps to 3-217 (TIAIVDYGMG…IYRNFVHWKP (215 aa)). C82 serves as the catalytic Nucleophile. Catalysis depends on residues H197 and E199.

As to quaternary structure, heterodimer of HisH and HisF.

The protein resides in the cytoplasm. It carries out the reaction 5-[(5-phospho-1-deoxy-D-ribulos-1-ylimino)methylamino]-1-(5-phospho-beta-D-ribosyl)imidazole-4-carboxamide + L-glutamine = D-erythro-1-(imidazol-4-yl)glycerol 3-phosphate + 5-amino-1-(5-phospho-beta-D-ribosyl)imidazole-4-carboxamide + L-glutamate + H(+). The enzyme catalyses L-glutamine + H2O = L-glutamate + NH4(+). The protein operates within amino-acid biosynthesis; L-histidine biosynthesis; L-histidine from 5-phospho-alpha-D-ribose 1-diphosphate: step 5/9. Functionally, IGPS catalyzes the conversion of PRFAR and glutamine to IGP, AICAR and glutamate. The HisH subunit catalyzes the hydrolysis of glutamine to glutamate and ammonia as part of the synthesis of IGP and AICAR. The resulting ammonia molecule is channeled to the active site of HisF. The protein is Imidazole glycerol phosphate synthase subunit HisH of Ralstonia nicotianae (strain ATCC BAA-1114 / GMI1000) (Ralstonia solanacearum).